The following is a 251-amino-acid chain: YlmG homolog protein 2, chloroplastic (251 aa).

The transit peptide at 1–51 (MEASANEPAMKSLKSNPSGPIPNFFVSLSSAFTQTPLVRSNKPNLLLLPPV) directs the protein to the chloroplast. 2 helical membrane-spanning segments follow: residues 119-139 (GFAAVLPGDSVAGLVVANGLI) and 183-203 (FIPPLGGLDLSPILAFLVLNA). Positions 232–243 (VRRRRLSSHKDH) are enriched in basic residues. The disordered stretch occupies residues 232 to 251 (VRRRRLSSHKDHRPSSASMT).

This sequence belongs to the YggT family.

The protein localises to the plastid. The protein resides in the chloroplast thylakoid membrane. Not required for the biogenesis and accumulation of native cytochrome b6 in the thylakoid membrane. Not functionally involved in the pathway for covalent binding of the c-type heme to cytochrome b6. This is YlmG homolog protein 2, chloroplastic from Arabidopsis thaliana (Mouse-ear cress).